The following is a 155-amino-acid chain: Putative pre-16S rRNA nuclease (155 aa).

Belongs to the YqgF nuclease family.

The protein resides in the cytoplasm. Could be a nuclease involved in processing of the 5'-end of pre-16S rRNA. This is Putative pre-16S rRNA nuclease from Wolbachia sp. subsp. Drosophila simulans (strain wRi).